The primary structure comprises 596 residues: UvrABC system protein C (596 aa).

One can recognise a GIY-YIG domain in the interval 16 to 95; sequence SSPGVYRFYS…IKENKPKYNV (80 aa). In terms of domain architecture, UVR spans 209–244; sequence SSVKKYYQEKMLSAAEDMQFEKAQFFKERYNSVLGL.

Belongs to the UvrC family. Interacts with UvrB in an incision complex.

The protein localises to the cytoplasm. Functionally, the UvrABC repair system catalyzes the recognition and processing of DNA lesions. UvrC both incises the 5' and 3' sides of the lesion. The N-terminal half is responsible for the 3' incision and the C-terminal half is responsible for the 5' incision. This is UvrABC system protein C from Cytophaga hutchinsonii (strain ATCC 33406 / DSM 1761 / CIP 103989 / NBRC 15051 / NCIMB 9469 / D465).